The following is a 278-amino-acid chain: Urease accessory protein UreD 1 (278 aa).

Belongs to the UreD family. UreD, UreF and UreG form a complex that acts as a GTP-hydrolysis-dependent molecular chaperone, activating the urease apoprotein by helping to assemble the nickel containing metallocenter of UreC. The UreE protein probably delivers the nickel.

The protein localises to the cytoplasm. In terms of biological role, required for maturation of urease via the functional incorporation of the urease nickel metallocenter. In Bradyrhizobium sp. (strain ORS 278), this protein is Urease accessory protein UreD 1.